Here is a 968-residue protein sequence, read N- to C-terminus: Alanine--tRNA ligase, cytoplasmic (968 aa).

Position 1 is an N-acetylmethionine (M1). ATP-binding positions include R77, H95, W176, and I214–N216. L-alanine is bound by residues N216 and D239. G243 serves as a coordination point for ATP. Phosphoserine occurs at positions 399 and 555. Residues H605, H609, C723, and H727 each coordinate Zn(2+). A Nuclear localization signal motif is present at residues R750–A763. The residue at position 876 (K876) is an N6-acetyllysine. Position 943 is an N6,N6,N6-trimethyllysine; alternate (K943). K943 is subject to N6,N6-dimethyllysine; alternate. Position 943 is an N6-methyllysine; alternate (K943).

The protein belongs to the class-II aminoacyl-tRNA synthetase family. In terms of assembly, monomer. Interacts with ANKRD16; the interaction is direct. It depends on Zn(2+) as a cofactor. Post-translationally, ISGylated. Methylation at 'Lys-943' by METTL21C.

The protein resides in the cytoplasm. Its subcellular location is the nucleus. The enzyme catalyses tRNA(Ala) + L-alanine + ATP = L-alanyl-tRNA(Ala) + AMP + diphosphate. It carries out the reaction (S)-lactate + ATP + H(+) = (S)-lactoyl-AMP + diphosphate. The catalysed reaction is (S)-lactoyl-AMP + L-lysyl-[protein] = N(6)-[(S)-lactoyl]-L-lysyl-[protein] + AMP + 2 H(+). Its activity is regulated as follows. The protein lactyltransferase activity is inhibited by beta-alanine. In terms of biological role, catalyzes the attachment of alanine to tRNA(Ala) in a two-step reaction: alanine is first activated by ATP to form Ala-AMP and then transferred to the acceptor end of tRNA(Ala). Also edits incorrectly charged tRNA(Ala) via its editing domain. In presence of high levels of lactate, also acts as a protein lactyltransferase that mediates lactylation of lysine residues in target proteins, such as TEAD1, TP53/p53 and YAP1. Protein lactylation takes place in a two-step reaction: lactate is first activated by ATP to form lactate-AMP and then transferred to lysine residues of target proteins. Acts as an inhibitor of TP53/p53 activity by catalyzing lactylation of TP53/p53. Acts as a positive regulator of the Hippo pathway by mediating lactylation of TEAD1 and YAP1. This chain is Alanine--tRNA ligase, cytoplasmic, found in Mus musculus (Mouse).